The chain runs to 147 residues: MSNFTAEDKAAITSLWAKVNVEDAGGETLGRLLVVYPWTQRFFDSFGSLSSPSAIMGNPKVKAHGAKVLTSLGEAIKNLDDLKGTFGQLSELHCDKLHVDPENFRLLGNVLVTVLAVLHGKEFTPEVQASWQKMVAGVASALGSRYH.

Positions 3-147 constitute a Globin domain; that stretch reads NFTAEDKAAI…VASALGSRYH (145 aa). 2 residues coordinate heme b: His64 and His93.

It belongs to the globin family. Heterotetramer of two alpha chains and two gamma chains in fetal hemoglobin (Hb F). Red blood cells.

In terms of biological role, gamma chains make up the fetal hemoglobin F, in combination with alpha chains. In Aotus azarae (Azara's night monkey), this protein is Hemoglobin subunit gamma (HBG).